The following is a 400-amino-acid chain: MADGGIDRKADEKIQFSTSKEVTVHPTFESMSLKESLLRGIYAYGYESPSAVQSRAIVQICKGRDTIAQAQSGTGKTATFSISMLQVIDTAVRETQALVLSPTRELATQIQSVVMALGDYMNVQCHACIGGTNVGEDIRKLDYGQHIVSGTPGRVADMIRRRHLRTRHIKMLVLDEADELLNQGFREQIYDVYRYLPPATQVVVVSATLPYDVLDMTTKFMTDPVRILVKRDELTLEGLKQYFIAVEKEDWKFDTLCDLYDTLTITQAVIFCNTRRKVDWLTDKMREANFTVSSMHGDMPQKERDSIMQDFRQGNSRVLISTDVWARGIDVQQVSLVINYDLPSNRENYIHRIGRSGRFGRKGVAINFVTSEDVRILRDIELYYSTQIDEMPMNVADLIS.

The short motif at 26–54 is the Q motif element; sequence PTFESMSLKESLLRGIYAYGYESPSAVQS. The 171-residue stretch at 57-227 folds into the Helicase ATP-binding domain; that stretch reads IVQICKGRDT…TKFMTDPVRI (171 aa). 70–77 serves as a coordination point for ATP; sequence AQSGTGKT. Residues 175 to 178 carry the DEAD box motif; sequence DEAD. A Helicase C-terminal domain is found at 238–399; the sequence is GLKQYFIAVE…EMPMNVADLI (162 aa).

It belongs to the DEAD box helicase family. DDX48/FAL1 subfamily.

The protein resides in the nucleus. Its subcellular location is the nucleolus. The enzyme catalyses ATP + H2O = ADP + phosphate + H(+). Its function is as follows. ATP-dependent RNA helicase involved in 40S ribosomal subunit biogenesis. Required for the processing and cleavage of 35S pre-rRNA at sites A0, A1, and A2, leading to mature 18S rRNA. The polypeptide is ATP-dependent RNA helicase fal-1 (fal-1) (Neurospora crassa (strain ATCC 24698 / 74-OR23-1A / CBS 708.71 / DSM 1257 / FGSC 987)).